Reading from the N-terminus, the 106-residue chain is Toxin-like structure LSTX-D8 (106 aa).

A signal peptide spans 1 to 20 (MTKVLVVVALLVTLISYSSS). Residues 21 to 41 (EGIDDLEADELLSLMANEQTR) constitute a propeptide that is removed on maturation. Disulfide bonds link Cys-45–Cys-60, Cys-52–Cys-69, Cys-59–Cys-85, and Cys-71–Cys-83.

Belongs to the neurotoxin 19 (CSTX) family. 02 (D7) subfamily. Expressed by the venom gland.

It localises to the secreted. This chain is Toxin-like structure LSTX-D8, found in Lycosa singoriensis (Wolf spider).